The chain runs to 159 residues: Ribosomal RNA large subunit methyltransferase H (159 aa).

S-adenosyl-L-methionine contacts are provided by residues Leu-76, Gly-108, and 127 to 132; that span reads FGKLTM.

This sequence belongs to the RNA methyltransferase RlmH family. Homodimer.

The protein localises to the cytoplasm. The enzyme catalyses pseudouridine(1915) in 23S rRNA + S-adenosyl-L-methionine = N(3)-methylpseudouridine(1915) in 23S rRNA + S-adenosyl-L-homocysteine + H(+). Specifically methylates the pseudouridine at position 1915 (m3Psi1915) in 23S rRNA. In Lacticaseibacillus casei (strain BL23) (Lactobacillus casei), this protein is Ribosomal RNA large subunit methyltransferase H.